The primary structure comprises 497 residues: Signal recognition particle subunit SRP54 2 (497 aa).

Residues 1–295 (MVLAQLGGSI…DVKPFVSRLL (295 aa)) are G-domain. GTP contacts are provided by residues 108-115 (GLQGSGKT), 190-194 (DTSGR), and 248-251 (TKLD). Residues 296–497 (GMGDLSGLMD…MLGGMGLGGD (202 aa)) are M-domain.

It belongs to the GTP-binding SRP family. SRP54 subfamily. Component of a signal recognition particle (SRP) complex that consists of a 7SL RNA molecule of 300 nucleotides and six protein subunits: SRP72, SRP68, SRP54, SRP19, SRP14 and SRP9.

The protein localises to the cytoplasm. It localises to the endoplasmic reticulum. It catalyses the reaction GTP + H2O = GDP + phosphate + H(+). In terms of biological role, component of the signal recognition particle (SRP) complex, a ribonucleoprotein complex that mediates the cotranslational targeting of secretory and membrane proteins to the endoplasmic reticulum (ER). As part of the SRP complex, associates with the SRP receptor (SR) component SRPRA to target secretory proteins to the endoplasmic reticulum membrane. Binds to the signal sequence of presecretory proteins when they emerge from the ribosomes. Displays basal GTPase activity, and stimulates reciprocal GTPase activation of the SR subunit SRPRA. Forms a guanosine 5'-triphosphate (GTP)-dependent complex with the SR subunit SRPRA. SR compaction and GTPase mediated rearrangement of SR drive SRP-mediated cotranslational protein translocation into the ER. Requires the presence of SRP9/SRP14 and/or SRP19 to stably interact with RNA. The chain is Signal recognition particle subunit SRP54 2 (SRP54-2) from Hordeum vulgare (Barley).